Here is a 207-residue protein sequence, read N- to C-terminus: LexA repressor (207 aa).

The H-T-H motif DNA-binding region spans 28–48 (VREIGEAVGLASSSTVHGHLS). Active-site for autocatalytic cleavage activity residues include Ser130 and Lys168.

Belongs to the peptidase S24 family. Homodimer.

It carries out the reaction Hydrolysis of Ala-|-Gly bond in repressor LexA.. In terms of biological role, represses a number of genes involved in the response to DNA damage (SOS response), including recA and lexA. In the presence of single-stranded DNA, RecA interacts with LexA causing an autocatalytic cleavage which disrupts the DNA-binding part of LexA, leading to derepression of the SOS regulon and eventually DNA repair. This Staphylococcus aureus (strain Mu3 / ATCC 700698) protein is LexA repressor.